The primary structure comprises 284 residues: Nucleotide-binding protein VF_0384 (284 aa).

8 to 15 (GSSGAGKS) serves as a coordination point for ATP. 56 to 59 (DIRN) is a GTP binding site.

The protein belongs to the RapZ-like family.

Displays ATPase and GTPase activities. This chain is Nucleotide-binding protein VF_0384, found in Aliivibrio fischeri (strain ATCC 700601 / ES114) (Vibrio fischeri).